A 583-amino-acid chain; its full sequence is Aspartate--tRNA(Asp/Asn) ligase (583 aa).

Glu171 provides a ligand contact to L-aspartate. The tract at residues 195–198 (QLFK) is aspartate. An L-aspartate-binding site is contributed by Arg217. ATP is bound by residues 217 to 219 (RDE) and Gln226. His443 is a binding site for L-aspartate. Position 476 (Glu476) interacts with ATP. Residue Arg483 participates in L-aspartate binding. 528–531 (GLDR) is a binding site for ATP.

This sequence belongs to the class-II aminoacyl-tRNA synthetase family. Type 1 subfamily. In terms of assembly, homodimer.

The protein localises to the cytoplasm. The catalysed reaction is tRNA(Asx) + L-aspartate + ATP = L-aspartyl-tRNA(Asx) + AMP + diphosphate. Aspartyl-tRNA synthetase with relaxed tRNA specificity since it is able to aspartylate not only its cognate tRNA(Asp) but also tRNA(Asn). Reaction proceeds in two steps: L-aspartate is first activated by ATP to form Asp-AMP and then transferred to the acceptor end of tRNA(Asp/Asn). The sequence is that of Aspartate--tRNA(Asp/Asn) ligase from Ruthia magnifica subsp. Calyptogena magnifica.